The following is a 182-amino-acid chain: tRNA-splicing endonuclease (182 aa).

Catalysis depends on residues Tyr-119, His-127, and Lys-158.

The protein belongs to the tRNA-intron endonuclease family. Archaeal short subfamily. In terms of assembly, homotetramer; although the tetramer contains four active sites, only two participate in the cleavage. Therefore, it should be considered as a dimer of dimers.

The enzyme catalyses pretRNA = a 3'-half-tRNA molecule with a 5'-OH end + a 5'-half-tRNA molecule with a 2',3'-cyclic phosphate end + an intron with a 2',3'-cyclic phosphate and a 5'-hydroxyl terminus.. Functionally, endonuclease that removes tRNA introns. Cleaves pre-tRNA at the 5'- and 3'-splice sites to release the intron. The products are an intron and two tRNA half-molecules bearing 2',3' cyclic phosphate and 5'-OH termini. Recognizes a pseudosymmetric substrate in which 2 bulged loops of 3 bases are separated by a stem of 4 bp. The chain is tRNA-splicing endonuclease from Saccharolobus islandicus (strain Y.N.15.51 / Yellowstone #2) (Sulfolobus islandicus).